The chain runs to 379 residues: MTAPHRSTIHILGLGAMGTVLAVDLLRFTNALVVPLFRSQERLAQFQKTNGNNISIRKLYLEGSPIFSYPVEKCECPETFSKKPIDNLVVTTKTYQTKEALAPYLPYINKNTNLILIQNGLGVLELLREEIFTDSKNRPHLFQGVISHGVYQDKAGVFNHAGWAGMKIAKLPWTEEEMIQKKSVVEDDAANNSLVKLLTEPKFAKEFGIEHSTYQEMLFGQLFKFLVNACMNPVTAILDCVNGEMKASCGPVFTSIIDECLQILRVAYRPLFQYHEKYSGNEEYPEMDVNAVLTTDNMVSEVTRIGCDINSRNSSSMRQDTLFLRDIEIEYINGYVVKLADNLNLDPNCCKVNKTIGELATMRLALNRSRSINGDWRKD.

Residues 13 to 18 and Asn119 contribute to the NADP(+) site; that span reads GLGAMG. Asn119 contacts substrate. The active-site Proton donor is the Lys224. Substrate-binding residues include Asn228, Asn232, and Ser316. Glu328 is an NADP(+) binding site.

This sequence belongs to the ketopantoate reductase family.

The catalysed reaction is (R)-pantoate + NADP(+) = 2-dehydropantoate + NADPH + H(+). It participates in cofactor biosynthesis; (R)-pantothenate biosynthesis; (R)-pantoate from 3-methyl-2-oxobutanoate: step 2/2. Its function is as follows. Catalyzes the NADPH-dependent reduction of ketopantoate into pantoic acid. This Saccharomyces cerevisiae (strain ATCC 204508 / S288c) (Baker's yeast) protein is 2-dehydropantoate 2-reductase (PAN5).